A 175-amino-acid polypeptide reads, in one-letter code: Development-specific protein S homolog (175 aa).

Beta/gamma crystallin 'Greek key' domains are found at residues 2-46 (ANIT…KVPP) and 48-86 (VKAI…KVMS). The interval 87–90 (VPVQ) is connecting peptide. 2 Beta/gamma crystallin 'Greek key' domains span residues 91–135 (PRAR…KPEG) and 136–175 (LKVV…RITP).

This sequence belongs to the beta/gamma-crystallin family.

The protein resides in the spore. Its subcellular location is the perispore. This chain is Development-specific protein S homolog (ops), found in Myxococcus xanthus.